The chain runs to 156 residues: Small ribosomal subunit protein uS7 (156 aa).

Belongs to the universal ribosomal protein uS7 family. Part of the 30S ribosomal subunit. Contacts proteins S9 and S11.

Its function is as follows. One of the primary rRNA binding proteins, it binds directly to 16S rRNA where it nucleates assembly of the head domain of the 30S subunit. Is located at the subunit interface close to the decoding center, probably blocks exit of the E-site tRNA. The protein is Small ribosomal subunit protein uS7 of Alkaliphilus oremlandii (strain OhILAs) (Clostridium oremlandii (strain OhILAs)).